The chain runs to 400 residues: Cysteine desulfurase 1 (400 aa).

Pyridoxal 5'-phosphate contacts are provided by residues 71-72 (GT), N150, Q178, and 198-200 (SGH). K201 carries the N6-(pyridoxal phosphate)lysine modification. Position 236 (T236) interacts with pyridoxal 5'-phosphate. The active-site Cysteine persulfide intermediate is the C324. C324 contributes to the [2Fe-2S] cluster binding site.

This sequence belongs to the class-V pyridoxal-phosphate-dependent aminotransferase family. NifS/IscS subfamily. Homodimer. Requires pyridoxal 5'-phosphate as cofactor.

The catalysed reaction is (sulfur carrier)-H + L-cysteine = (sulfur carrier)-SH + L-alanine. Functionally, catalyzes the removal of elemental sulfur atoms from cysteine to produce alanine. Seems to participate in the biosynthesis of the nitrogenase metalloclusters by providing the inorganic sulfur required for the Fe-S core formation. The polypeptide is Cysteine desulfurase 1 (Trichormus variabilis (strain ATCC 29413 / PCC 7937) (Anabaena variabilis)).